The chain runs to 360 residues: 3-dehydroquinate synthase (360 aa).

Residues 70-75, 104-108, 128-129, Lys141, and Lys150 contribute to the NAD(+) site; these read DGEKYK, GVIGD, and TT. Zn(2+)-binding residues include Glu183, His246, and His263.

Belongs to the sugar phosphate cyclases superfamily. Dehydroquinate synthase family. Co(2+) serves as cofactor. It depends on Zn(2+) as a cofactor. The cofactor is NAD(+).

It localises to the cytoplasm. It carries out the reaction 7-phospho-2-dehydro-3-deoxy-D-arabino-heptonate = 3-dehydroquinate + phosphate. Its pathway is metabolic intermediate biosynthesis; chorismate biosynthesis; chorismate from D-erythrose 4-phosphate and phosphoenolpyruvate: step 2/7. Catalyzes the conversion of 3-deoxy-D-arabino-heptulosonate 7-phosphate (DAHP) to dehydroquinate (DHQ). This Acinetobacter baumannii (strain AYE) protein is 3-dehydroquinate synthase.